Consider the following 296-residue polypeptide: Diaminopimelate epimerase (296 aa).

3 residues coordinate substrate: asparagine 17, glutamine 49, and asparagine 69. Cysteine 78 serves as the catalytic Proton donor. Residues 79–80 (GN), asparagine 171, asparagine 205, and 223–224 (ER) contribute to the substrate site. Cysteine 232 functions as the Proton acceptor in the catalytic mechanism. 233–234 (GT) lines the substrate pocket.

This sequence belongs to the diaminopimelate epimerase family. Homodimer.

The protein localises to the cytoplasm. The enzyme catalyses (2S,6S)-2,6-diaminopimelate = meso-2,6-diaminopimelate. It participates in amino-acid biosynthesis; L-lysine biosynthesis via DAP pathway; DL-2,6-diaminopimelate from LL-2,6-diaminopimelate: step 1/1. Its function is as follows. Catalyzes the stereoinversion of LL-2,6-diaminopimelate (L,L-DAP) to meso-diaminopimelate (meso-DAP), a precursor of L-lysine and an essential component of the bacterial peptidoglycan. The sequence is that of Diaminopimelate epimerase from Methylorubrum extorquens (strain PA1) (Methylobacterium extorquens).